The following is a 344-amino-acid chain: Fructose-1,6-bisphosphatase class 1 (344 aa).

Glu91, Asp110, Leu112, and Asp113 together coordinate Mg(2+). Substrate is bound by residues 113–116 and Asn200; that span reads DGSS. Mg(2+) is bound at residue Glu272.

It belongs to the FBPase class 1 family. Homotetramer. Requires Mg(2+) as cofactor.

It is found in the cytoplasm. The catalysed reaction is beta-D-fructose 1,6-bisphosphate + H2O = beta-D-fructose 6-phosphate + phosphate. Its pathway is carbohydrate biosynthesis; Calvin cycle. This is Fructose-1,6-bisphosphatase class 1 from Rhodopseudomonas palustris (strain BisB18).